The chain runs to 457 residues: Ribosomal protein uS12 methylthiotransferase RimO (457 aa).

The region spanning 6–116 is the MTTase N-terminal domain; it reads PKVGFVSLGC…VMEAVHAALP (111 aa). [4Fe-4S] cluster contacts are provided by cysteine 15, cysteine 51, cysteine 80, cysteine 147, cysteine 151, and cysteine 154. In terms of domain architecture, Radical SAM core spans 133-371; the sequence is LTPRHYAYLK…AKQAQISALR (239 aa). Residues 373-441 form the TRAM domain; it reads ESKIGSVQQC…EHDLFGDALP (69 aa).

It belongs to the methylthiotransferase family. RimO subfamily. It depends on [4Fe-4S] cluster as a cofactor.

The protein localises to the cytoplasm. The enzyme catalyses L-aspartate(89)-[ribosomal protein uS12]-hydrogen + (sulfur carrier)-SH + AH2 + 2 S-adenosyl-L-methionine = 3-methylsulfanyl-L-aspartate(89)-[ribosomal protein uS12]-hydrogen + (sulfur carrier)-H + 5'-deoxyadenosine + L-methionine + A + S-adenosyl-L-homocysteine + 2 H(+). Its function is as follows. Catalyzes the methylthiolation of an aspartic acid residue of ribosomal protein uS12. The protein is Ribosomal protein uS12 methylthiotransferase RimO of Xanthomonas axonopodis pv. citri (strain 306).